We begin with the raw amino-acid sequence, 320 residues long: Acetyl-coenzyme A carboxylase carboxyl transferase subunit alpha (320 aa).

Positions 41–295 (RIEEKAGQAL…GEAIAQAFDE (255 aa)) constitute a CoA carboxyltransferase C-terminal domain.

Belongs to the AccA family. In terms of assembly, acetyl-CoA carboxylase is a heterohexamer composed of biotin carboxyl carrier protein (AccB), biotin carboxylase (AccC) and two subunits each of ACCase subunit alpha (AccA) and ACCase subunit beta (AccD).

Its subcellular location is the cytoplasm. It catalyses the reaction N(6)-carboxybiotinyl-L-lysyl-[protein] + acetyl-CoA = N(6)-biotinyl-L-lysyl-[protein] + malonyl-CoA. It participates in lipid metabolism; malonyl-CoA biosynthesis; malonyl-CoA from acetyl-CoA: step 1/1. Its function is as follows. Component of the acetyl coenzyme A carboxylase (ACC) complex. First, biotin carboxylase catalyzes the carboxylation of biotin on its carrier protein (BCCP) and then the CO(2) group is transferred by the carboxyltransferase to acetyl-CoA to form malonyl-CoA. The polypeptide is Acetyl-coenzyme A carboxylase carboxyl transferase subunit alpha (Bradyrhizobium sp. (strain BTAi1 / ATCC BAA-1182)).